Here is a 277-residue protein sequence, read N- to C-terminus: Phosphoenolpyruvate synthase regulatory protein (277 aa).

157–164 (GVSRCGKT) contributes to the ADP binding site.

This sequence belongs to the pyruvate, phosphate/water dikinase regulatory protein family. PSRP subfamily.

The enzyme catalyses [pyruvate, water dikinase] + ADP = [pyruvate, water dikinase]-phosphate + AMP + H(+). The catalysed reaction is [pyruvate, water dikinase]-phosphate + phosphate + H(+) = [pyruvate, water dikinase] + diphosphate. Its function is as follows. Bifunctional serine/threonine kinase and phosphorylase involved in the regulation of the phosphoenolpyruvate synthase (PEPS) by catalyzing its phosphorylation/dephosphorylation. This chain is Phosphoenolpyruvate synthase regulatory protein, found in Escherichia coli O7:K1 (strain IAI39 / ExPEC).